The chain runs to 1050 residues: Sentrin-specific protease 7 (1050 aa).

3 disordered regions span residues 1–28 (MDKRKLGRRPSSSEIITEGKRKKSSSDL), 183–288 (PPVT…DVKY), and 304–365 (RRLR…KSDF). Serine 11, serine 12, serine 13, and serine 25 each carry phosphoserine. Low complexity predominate over residues 196-211 (LQSEQLSSSSDGSLES). A compositionally biased stretch (polar residues) spans 259–271 (ISDTQPEDLNSGS). Basic and acidic residues predominate over residues 273 to 288 (GCDHLEQESRNKDVKY). A compositionally biased stretch (polar residues) spans 310–320 (LPDSQYCTSLD). Composition is skewed to basic and acidic residues over residues 321 to 331 (KSTEQTKKQED) and 338 to 365 (EFEKPSENYHQDPKLPEEITTKPTKSDF). Phosphoserine occurs at positions 373, 433, 443, and 444. Residues 443–476 (SSDEEGPVEHKSSEILKLQSKQDRETTNENESTS) form a disordered region. Residues 449 to 469 (PVEHKSSEILKLQSKQDRETT) show a composition bias toward basic and acidic residues. The tract at residues 760–1050 (LGVTNEDLEC…HLQQQKGSSS (291 aa)) is protease. Residues histidine 860 and aspartate 939 contribute to the active site. Cysteine 992 acts as the Nucleophile in catalysis.

Belongs to the peptidase C48 family.

It is found in the cytoplasm. In terms of biological role, protease that acts as a positive regulator of the cGAS-STING pathway by catalyzing desumoylation of CGAS. Desumoylation of CGAS promotes DNA-binding activity of CGAS, subsequent oligomerization and activation. Deconjugates SUMO2 and SUMO3 from targeted proteins, but not SUMO1. Catalyzes the deconjugation of poly-SUMO2 and poly-SUMO3 chains. Has very low efficiency in processing full-length SUMO proteins to their mature forms. This Homo sapiens (Human) protein is Sentrin-specific protease 7.